The sequence spans 505 residues: Cytochrome P450 76A2 (505 aa).

Residue cysteine 448 participates in heme binding.

It belongs to the cytochrome P450 family. It depends on heme as a cofactor.

The sequence is that of Cytochrome P450 76A2 (CYP76A2) from Solanum melongena (Eggplant).